The sequence spans 1379 residues: DNA-directed RNA polymerase subunit beta (1379 aa).

The protein belongs to the RNA polymerase beta chain family. As to quaternary structure, the RNAP catalytic core consists of 2 alpha, 1 beta, 1 beta' and 1 omega subunit. When a sigma factor is associated with the core the holoenzyme is formed, which can initiate transcription.

It carries out the reaction RNA(n) + a ribonucleoside 5'-triphosphate = RNA(n+1) + diphosphate. DNA-dependent RNA polymerase catalyzes the transcription of DNA into RNA using the four ribonucleoside triphosphates as substrates. This Rhizobium leguminosarum bv. trifolii (strain WSM2304) protein is DNA-directed RNA polymerase subunit beta.